The primary structure comprises 136 residues: Ig heavy chain V region BCL1 (136 aa).

The first 19 residues, 1–19 (MGWSCIIFFLVATATGVHS), serve as a signal peptide directing secretion. The Ig-like domain maps to 20–135 (QVQLQQSGPE…WGQGTTLTVS (116 aa)).

The protein is Ig heavy chain V region BCL1 of Mus musculus (Mouse).